Here is a 109-residue protein sequence, read N- to C-terminus: MSKVFVIILVALMVAISIASAHRPPPNPRCLPGHSKCKYEPKKNSCCLGFQCTERNQCELVYPGHHGKPCGKDNLLGCILPPPTFKPRPCGKYNLKGCKPIRPRPHPHH.

An N-terminal signal peptide occupies residues 1–21 (MSKVFVIILVALMVAISIASA). Disulfide bonds link Cys-30–Cys-47, Cys-37–Cys-52, Cys-46–Cys-58, Cys-70–Cys-90, and Cys-78–Cys-98.

Expressed by the venom gland.

Its subcellular location is the secreted. This chain is Cysteine-rich venom protein 7, found in Pimpla hypochondriaca (Parasitoid wasp).